The following is a 543-amino-acid chain: Methionine--tRNA ligase (543 aa).

The 'HIGH' region signature appears at 13–23 (PYANGPLHVGH). Residues cysteine 145, cysteine 148, cysteine 158, and cysteine 161 each coordinate Zn(2+). A 'KMSKS' region motif is present at residues 334 to 338 (QFSKS). Residue lysine 337 participates in ATP binding.

It belongs to the class-I aminoacyl-tRNA synthetase family. MetG type 1 subfamily. It depends on Zn(2+) as a cofactor.

It is found in the cytoplasm. It catalyses the reaction tRNA(Met) + L-methionine + ATP = L-methionyl-tRNA(Met) + AMP + diphosphate. Functionally, is required not only for elongation of protein synthesis but also for the initiation of all mRNA translation through initiator tRNA(fMet) aminoacylation. This is Methionine--tRNA ligase from Thermoplasma volcanium (strain ATCC 51530 / DSM 4299 / JCM 9571 / NBRC 15438 / GSS1).